The primary structure comprises 396 residues: Elongation factor Tu (396 aa).

The 197-residue stretch at 10–206 (KPHVNVGTIG…ALDSYIPTPE (197 aa)) folds into the tr-type G domain. Residues 19–26 (GHVDHGKT) form a G1 region. 19-26 (GHVDHGKT) is a binding site for GTP. Threonine 26 is a binding site for Mg(2+). The G2 stretch occupies residues 60–64 (GITIN). Residues 81–84 (DCPG) are G3. Residues 81–85 (DCPGH) and 136–139 (NKCD) each bind GTP. Residues 136–139 (NKCD) are G4. The G5 stretch occupies residues 174 to 176 (SAK).

Belongs to the TRAFAC class translation factor GTPase superfamily. Classic translation factor GTPase family. EF-Tu/EF-1A subfamily. As to quaternary structure, monomer.

It localises to the cytoplasm. It carries out the reaction GTP + H2O = GDP + phosphate + H(+). In terms of biological role, GTP hydrolase that promotes the GTP-dependent binding of aminoacyl-tRNA to the A-site of ribosomes during protein biosynthesis. The polypeptide is Elongation factor Tu (Ralstonia nicotianae (strain ATCC BAA-1114 / GMI1000) (Ralstonia solanacearum)).